We begin with the raw amino-acid sequence, 175 residues long: ATP synthase subunit delta (175 aa).

Belongs to the ATPase delta chain family. In terms of assembly, F-type ATPases have 2 components, F(1) - the catalytic core - and F(0) - the membrane proton channel. F(1) has five subunits: alpha(3), beta(3), gamma(1), delta(1), epsilon(1). F(0) has three main subunits: a(1), b(2) and c(10-14). The alpha and beta chains form an alternating ring which encloses part of the gamma chain. F(1) is attached to F(0) by a central stalk formed by the gamma and epsilon chains, while a peripheral stalk is formed by the delta and b chains.

The protein resides in the cell inner membrane. In terms of biological role, f(1)F(0) ATP synthase produces ATP from ADP in the presence of a proton or sodium gradient. F-type ATPases consist of two structural domains, F(1) containing the extramembraneous catalytic core and F(0) containing the membrane proton channel, linked together by a central stalk and a peripheral stalk. During catalysis, ATP synthesis in the catalytic domain of F(1) is coupled via a rotary mechanism of the central stalk subunits to proton translocation. Functionally, this protein is part of the stalk that links CF(0) to CF(1). It either transmits conformational changes from CF(0) to CF(1) or is implicated in proton conduction. The sequence is that of ATP synthase subunit delta from Xanthomonas campestris pv. campestris (strain 8004).